We begin with the raw amino-acid sequence, 222 residues long: Pyrrolidone-carboxylate peptidase (222 aa).

Active-site residues include E80, C146, and H170.

This sequence belongs to the peptidase C15 family. In terms of assembly, homotetramer.

It localises to the cytoplasm. It carries out the reaction Release of an N-terminal pyroglutamyl group from a polypeptide, the second amino acid generally not being Pro.. Its function is as follows. Removes 5-oxoproline from various penultimate amino acid residues except L-proline. The chain is Pyrrolidone-carboxylate peptidase from Mycobacterium tuberculosis (strain ATCC 25177 / H37Ra).